The following is a 408-amino-acid chain: Ubiquitin-associated domain-containing protein 1 (408 aa).

Positions 14-98 (LRLQVCTMEG…LLLIKKRAPP (85 aa)) constitute a Ubiquitin-like domain. A disordered region spans residues 100–119 (LPKMADVSAEEKRKQEQKAP). The segment covering 108-119 (AEEKRKQEQKAP) has biased composition (basic and acidic residues). The UBA 1 domain occupies 185–231 (DEDEEDRVDEIALRQLTEMGFPESRAVKALRLNHMSVTQAMEWLIEH). The tract at residues 235–275 (PAVDAPLPGQTPSEAAAEAGASSAEATAGPSSEAGGEEAKD) is disordered. The segment covering 245–268 (TPSEAAAEAGASSAEATAGPSSEA) has biased composition (low complexity). A UBA 2 domain is found at 291 to 331 (RPDPRAVIALMEMGFDEKEVVDALRVNNNQQNAACEWLLGD). One can recognise an STI1 domain in the interval 356–395 (NPVVQLGLTNPKTLLAFEDMLENPLNSTQWMNDPETGPVM).

Component of the KPC complex.

Its subcellular location is the cytoplasm. It participates in protein modification; protein ubiquitination. Non-catalytic component of the KPC complex, a E3 ubiquitin-protein ligase complex that mediates polyubiquitination of target proteins, such as CDKN1B and NFKB1. Within the KPC complex, UBAC1 acts as an adapter that promotes the transfer of target proteins that have been polyubiquitinated by RNF123/KPC1 to the 26S proteasome. The chain is Ubiquitin-associated domain-containing protein 1 (UBAC1) from Gallus gallus (Chicken).